A 167-amino-acid chain; its full sequence is UPF0254 protein MJ1251 (167 aa).

The protein belongs to the UPF0254 family.

The chain is UPF0254 protein MJ1251 from Methanocaldococcus jannaschii (strain ATCC 43067 / DSM 2661 / JAL-1 / JCM 10045 / NBRC 100440) (Methanococcus jannaschii).